The chain runs to 444 residues: uncharacterized protein (444 aa).

Position 268 is an N6-(pyridoxal phosphate)lysine (Lys268).

The protein belongs to the class-III pyridoxal-phosphate-dependent aminotransferase family. Pyridoxal 5'-phosphate is required as a cofactor.

This is an uncharacterized protein from Bacillus subtilis (strain 168).